Reading from the N-terminus, the 158-residue chain is C-type natriuretic peptide 3 (158 aa).

Positions 1–21 (MSLNLPGYALFFILLVASSGA) are cleaved as a signal peptide. Positions 22–136 (KPAPDLQILE…SKRSRSRYKK (115 aa)) are excised as a propeptide. Residues 32–95 (PPLSSLEEQE…EVQERGRGTG (64 aa)) form a disordered region. Basic and acidic residues predominate over residues 47 to 64 (VQEKVQEQQEEVQEKVQE). Residues 65 to 86 (QQEEVQEQQEEVQEQQEEQQEE) show a composition bias toward acidic residues. Cysteine 142 and cysteine 158 form a disulfide bridge.

It belongs to the natriuretic peptide family.

Its subcellular location is the secreted. Functionally, exhibits natriuretic and vasodepressant activity. Has cGMP-stimulating activity. May help to regulate body fluid homeostasis in a variety of aquatic environments. This is C-type natriuretic peptide 3 from Takifugu rubripes (Japanese pufferfish).